The sequence spans 391 residues: D-xylose 1-dehydrogenase (NADP(+)) (391 aa).

Belongs to the Gfo/Idh/MocA family.

The enzyme catalyses D-xylose + NADP(+) = D-xylono-1,5-lactone + NADPH + H(+). NADP-dependent D-xylose dehydrogenase catalyzing the oxydation of D-xylose into D-xylonolactone. Also displays some, albeit lower activity with D-glucose, D-galactose and L-arabinose as substrate. Probably not involved in D-xylose degradation, as it has been shown that H.jecorina assimilates D-xylose via D-xylose reductase and xylitol dehydrogenase, and it is unable to grow on D-xylonic acid as sole carbon source. May play a role in the regeneration of NADP(+) in the presence of D-xylose. This is D-xylose 1-dehydrogenase (NADP(+)) from Hypocrea jecorina (strain ATCC 56765 / BCRC 32924 / NRRL 11460 / Rut C-30) (Trichoderma reesei).